The chain runs to 112 residues: uncharacterized protein (112 aa).

It to Buchnera BU585.

This is an uncharacterized protein from Buchnera aphidicola subsp. Schizaphis graminum (strain Sg).